Consider the following 559-residue polypeptide: MANVDSDSRHLISEVEHEVNPGPMNIQFDSSDLRSKRPFYIEPTNIVNVNDVIQKVSDHAAAMNKRIHYYSRLTTPADKALIAPDHVVPAPEECYVYSPLGSAYKLKSYTEGYRKNTSLVTIFMIWNTMMGTSILSIPWGIKQAGFTTGMCVIVLMGLLTLYCCYRVVKSRSMIVTSDTTTWEYPDVCKHYFGSFGQWSSLLFSLVSLIGAMIVYWVLMSNFLFNTGKFIFNFIHHINDTDTVLSTNNSSPVICPSAGSGHPDNSSMIFYNSDTEVRLFERWWDKSKTVPFYLIGLLLPLLNFKSPSFFSKFNILGTVSVLYLIFIVTLKAIRLGFHLEFHWFAPTEFFVPEIRAQFPQLTGVLTLAFFIHNCIITLLKNNKNQENNVRDLCIAYMLVTLTYLYIGVLVFASFPSPPLPKDCIEQNFLDNFPSSDTLSFIARICLLFQMMTVYPLLGYLARVQLLGHIFGDIYPSIFHVLILNLIIVGAGVTMACFYPNIGGIIRYSGAACGLAFVFIYPSLIYILSQHQEERLTWPKLVFHIIIIILGLANLIAQFFM.

Residues 1 to 118 (MANVDSDSRH…YTEGYRKNTS (118 aa)) lie on the Cytoplasmic side of the membrane. Residues 119-139 (LVTIFMIWNTMMGTSILSIPW) traverse the membrane as a helical segment. An important for arginine binding and amino acid transport region spans residues 128–133 (TMMGTS). Serine 133 lines the arginine pocket. Residues 140-145 (GIKQAG) lie on the Lumenal side of the membrane. Residues 146–166 (FTTGMCVIVLMGLLTLYCCYR) form a helical membrane-spanning segment. The Cytoplasmic portion of the chain corresponds to 167–197 (VVKSRSMIVTSDTTTWEYPDVCKHYFGSFGQ). A helical membrane pass occupies residues 198-224 (WSSLLFSLVSLIGAMIVYWVLMSNFLF). Residues 225–281 (NTGKFIFNFIHHINDTDTVLSTNNSSPVICPSAGSGHPDNSSMIFYNSDTEVRLFER) are Lumenal-facing. N-linked (GlcNAc...) asparagine glycosylation is found at asparagine 238, asparagine 247, and asparagine 264. Residues cysteine 254 and cysteine 422 are joined by a disulfide bond. Residues 282–298 (WWDKSKTVPFYLIGLLL) traverse the membrane as a helical segment. Residues 299–307 (PLLNFKSPS) are Cytoplasmic-facing. A helical transmembrane segment spans residues 308 to 332 (FFSKFNILGTVSVLYLIFIVTLKAI). Residues 333–354 (RLGFHLEFHWFAPTEFFVPEIR) lie on the Lumenal side of the membrane. A helical transmembrane segment spans residues 355-375 (AQFPQLTGVLTLAFFIHNCII). Topologically, residues 376-392 (TLLKNNKNQENNVRDLC) are cytoplasmic. The chain crosses the membrane as a helical span at residues 393 to 413 (IAYMLVTLTYLYIGVLVFASF). The Lumenal segment spans residues 414–435 (PSPPLPKDCIEQNFLDNFPSSD). A helical transmembrane segment spans residues 436 to 456 (TLSFIARICLLFQMMTVYPLL). The short motif at 442–452 (RICLLFQMMTV) is the CARC motif element. The CRAC motif motif lies at 455–461 (LLGYLAR). The Cytoplasmic segment spans residues 457–477 (GYLARVQLLGHIFGDIYPSIF). A helical transmembrane segment spans residues 478 to 498 (HVLILNLIIVGAGVTMACFYP). Residues 499 to 505 (NIGGIIR) lie on the Lumenal side of the membrane. A helical membrane pass occupies residues 506-526 (YSGAACGLAFVFIYPSLIYIL). At 527 to 538 (SQHQEERLTWPK) the chain is on the cytoplasmic side. A helical membrane pass occupies residues 539–559 (LVFHIIIIILGLANLIAQFFM).

This sequence belongs to the amino acid/polyamine transporter 2 family. SLC38A9 subfamily. As to quaternary structure, associated component of the Ragulator complex (composed of LAMTOR1, LAMTOR2, LAMTOR3, LAMTOR4 and LAMTOR5). Associated component of the Rag GTPases heterodimers (composed of RRAGA, RRAGB, RRAGC and RRAGD); this interaction is independent of the Ragulator complex but depends on the nucleotide loading state of the Rag GTPase heterodimer. Interacts with TM4SF5. Interacts with NPC1; this interaction inhibits cholesterol-mediated mTORC1 activation via its sterol transport activity. Glycosylated.

The protein resides in the lysosome membrane. The protein localises to the late endosome membrane. It catalyses the reaction L-leucine(in) = L-leucine(out). The enzyme catalyses L-tyrosine(in) = L-tyrosine(out). It carries out the reaction L-glutamine(out) = L-glutamine(in). The catalysed reaction is L-asparagine(out) = L-asparagine(in). Functionally, lysosomal amino acid transporter involved in the activation of mTORC1 in response to amino acid levels. Probably acts as an amino acid sensor of the Rag GTPases and Ragulator complexes, 2 complexes involved in amino acid sensing and activation of mTORC1, a signaling complex promoting cell growth in response to growth factors, energy levels, and amino acids. Following activation by amino acids, the Ragulator and Rag GTPases function as a scaffold recruiting mTORC1 to lysosomes where it is in turn activated. SLC38A9 mediates transport of amino acids with low capacity and specificity with a slight preference for polar amino acids. Acts as an arginine sensor. Following activation by arginine binding, mediates transport of L-glutamine, leucine and tyrosine with high efficiency, and is required for the efficient utilization of these amino acids after lysosomal protein degradation. However, the transport mechanism is not well defined and the role of sodium is not clear. Can disassemble the lysosomal folliculin complex (LFC), and thereby triggers GAP activity of FLCN:FNIP2 toward RRAGC. Acts as an cholesterol sensor that conveys increases in lysosomal cholesterol, leading to lysosomal recruitment and activation of mTORC1 via the Rag GTPases. Guanine exchange factor (GEF) that, upon arginine binding, stimulates GDP release from RRAGA and therefore activates the Rag GTPase heterodimer and the mTORC1 pathway in response to nutrient sufficiency. The protein is Neutral amino acid transporter 9 of Rattus norvegicus (Rat).